The primary structure comprises 112 residues: Putative RNase TTE0752 (112 aa).

Residues Arg74 and His79 contribute to the active site. Positions 74-81 (RDKLIHEY) match the RX(4)HXY motif motif. Position 81 is an O-di-AMP-tyrosine (Tyr81).

This sequence belongs to the HepT RNase toxin family. In terms of assembly, homodimer, probably forms a complex with cognate antitoxin TTE0751. Modified by cognate antitoxin TTE0751; probably at least 2 successive AMPylation events occur on Tyr-81.

Its function is as follows. Probable toxic component of a putative type VII toxin-antitoxin (TA) system, probably an RNase. Probably neutralized by cognate antitoxin TTE0751. Neutralization may be due to AMPylation by TTE0751. The protein is Putative RNase TTE0752 of Caldanaerobacter subterraneus subsp. tengcongensis (strain DSM 15242 / JCM 11007 / NBRC 100824 / MB4) (Thermoanaerobacter tengcongensis).